Consider the following 694-residue polypeptide: Rabphilin-3A (694 aa).

Residues 1-12 (MTDTVFSNSSNR) are compositionally biased toward polar residues. The interval 1–51 (MTDTVFSNSSNRWMYPSDRPLQSNDKEQLQAGWSVHPGGQPDRQRKQEELT) is disordered. Residues 44 to 160 (QRKQEELTDE…KRSGAWFFKG (117 aa)) form the RabBD domain. The FYVE-type zinc-finger motif lies at 92–148 (GDGVNRCILCGEQLGMLGSACVVCEDCKKNVCTKCGVETNNRLHSVWLCKICIEQRE). Zn(2+)-binding residues include cysteine 98, cysteine 101, cysteine 115, cysteine 118, cysteine 123, cysteine 126, cysteine 140, and cysteine 143. A disordered region spans residues 166 to 388 (LPQPMPIKKT…EEEANSYDSD (223 aa)). Low complexity predominate over residues 177-186 (PQQPVSEPAA). A compositionally biased stretch (basic and acidic residues) spans 202–211 (ARGDSEDRRG). Arginine 226 carries the omega-N-methylarginine modification. At serine 272 the chain carries Phosphoserine. A compositionally biased stretch (low complexity) spans 352–370 (PSGPYSQASAAAPQPAAAR). Positions 375 to 388 (PEEEEEEANSYDSD) are enriched in acidic residues. Residues 392–514 (TLGALEFSLL…KPNQRKNFNI (123 aa)) enclose the C2 1 domain. Positions 422, 423, 429, 484, 485, 486, 492, 539, 581, 587, 641, 642, 643, and 649 each coordinate Ca(2+). The region spanning 550 to 683 (ERGKILVSLM…NKDKKIERWH (134 aa)) is the C2 2 domain. Phosphoserine is present on residues serine 692 and serine 693.

As to quaternary structure, interacts with RAB3B, RAB3C, RAB3D, RAB8A, RAB27A and RAB27B. Interacts with RAB3A; this interaction recruits RPH3A to synaptic vesicules. Interacts (via C2B domain) with SNAP25. Interacts with deubiquitinating enzyme CAND1; this interaction results in the deubiquitination of RPH3A. Interacts with GRIN2A and DLG4; this ternary complex regulates NMDA receptor composition at postsynaptic membranes. Interacts with SNCA. It depends on Ca(2+) as a cofactor. Post-translationally, ubiquitinated. Deubiquitinated by CAND1 to prevent its degradation.

The protein resides in the cytoplasmic vesicle. The protein localises to the secretory vesicle. Its subcellular location is the synaptic vesicle membrane. It localises to the cell projection. It is found in the dendritic spine. The protein resides in the postsynaptic cell membrane. The protein localises to the membrane. In terms of biological role, plays an essential role in docking and fusion steps of regulated exocytosis. At the presynaptic level, RPH3A is recruited by RAB3A to the synaptic vesicle membrane in a GTP-dependent manner where it modulates synaptic vesicle trafficking and calcium-triggered neurotransmitter release. In the post-synaptic compartment, forms a ternary complex with GRIN2A and DLG4 and regulates NMDA receptor stability. Also plays a role in the exocytosis of arginine vasopressin hormone. The protein is Rabphilin-3A (RPH3A) of Homo sapiens (Human).